The sequence spans 146 residues: Universal stress protein MT1672 (146 aa).

It belongs to the universal stress protein A family.

This is Universal stress protein MT1672 from Mycobacterium tuberculosis (strain CDC 1551 / Oshkosh).